A 65-amino-acid polypeptide reads, in one-letter code: Large ribosomal subunit protein bL35 (65 aa).

Residues 1–26 (MPKIKTHRGAAKRFSKTGTGKIKRSH) show a composition bias toward basic residues. Positions 1 to 41 (MPKIKTHRGAAKRFSKTGTGKIKRSHAFTSHILTSKTRKNK) are disordered.

It belongs to the bacterial ribosomal protein bL35 family.

The protein is Large ribosomal subunit protein bL35 of Geotalea daltonii (strain DSM 22248 / JCM 15807 / FRC-32) (Geobacter daltonii).